Consider the following 225-residue polypeptide: Golgi to ER traffic protein 1 (225 aa).

Residue M1 is a topological domain, lumenal. Residues 2–21 (NWVIIAALFFVIINKLLQYT) traverse the membrane as a helical segment. The Cytoplasmic segment spans residues 22-107 (SRYQEAWINK…SQSKLFNRLK (86 aa)). Residues 37 to 104 (DISSLSKEYS…AKDSQSKLFN (68 aa)) are a coiled coil. The helical transmembrane segment at 108–128 (LLTLTLPFMILKLWKGKFIVY) threads the bilayer. The Lumenal segment spans residues 129-172 (DIPTKDTFPVIVNGVLSQGLLYIPLLPINFLRGIDPNKHILVPG). The helical transmembrane segment at 173–189 (VSLGIWLMALTKTIDTV) threads the bilayer. The Cytoplasmic segment spans residues 190–225 (EFIVKQLVFQPVVSKQVKEKTKEKVVELKTTEAELD).

This sequence belongs to the WRB/GET1 family. As to quaternary structure, component of the Golgi to ER traffic (GET) complex, which is composed of GET1, GET2 and GET3. Within the complex, GET1 and GET2 form a heterotetramer which is stabilized by phosphatidylinositol binding and which binds to the GET3 homodimer.

It localises to the endoplasmic reticulum membrane. Its subcellular location is the golgi apparatus membrane. Its function is as follows. Required for the post-translational delivery of tail-anchored (TA) proteins to the endoplasmic reticulum. Together with GET2, acts as a membrane receptor for soluble GET3, which recognizes and selectively binds the transmembrane domain of TA proteins in the cytosol. The GET complex cooperates with the HDEL receptor ERD2 to mediate the ATP-dependent retrieval of resident ER proteins that contain a C-terminal H-D-E-L retention signal from the Golgi to the ER. The polypeptide is Golgi to ER traffic protein 1 (Vanderwaltozyma polyspora (strain ATCC 22028 / DSM 70294 / BCRC 21397 / CBS 2163 / NBRC 10782 / NRRL Y-8283 / UCD 57-17) (Kluyveromyces polysporus)).